Here is a 217-residue protein sequence, read N- to C-terminus: Ribose-5-phosphate isomerase A (217 aa).

Substrate contacts are provided by residues 28 to 31 (TGST), 81 to 84 (DGAD), and 94 to 97 (KGGG). Glu-103 (proton acceptor) is an active-site residue. Lys-121 contacts substrate.

This sequence belongs to the ribose 5-phosphate isomerase family. Homodimer.

The enzyme catalyses aldehydo-D-ribose 5-phosphate = D-ribulose 5-phosphate. Its pathway is carbohydrate degradation; pentose phosphate pathway; D-ribose 5-phosphate from D-ribulose 5-phosphate (non-oxidative stage): step 1/1. Its function is as follows. Catalyzes the reversible conversion of ribose-5-phosphate to ribulose 5-phosphate. This chain is Ribose-5-phosphate isomerase A, found in Aeromonas salmonicida (strain A449).